Consider the following 447-residue polypeptide: Tubulin beta-2 chain (447 aa).

8 residues coordinate GTP: Gln11, Glu69, Ser138, Gly142, Thr143, Gly144, Asn204, and Asn226. Glu69 provides a ligand contact to Mg(2+). Positions 426 to 447 are disordered; sequence QDAGVDEEEEEYEEEAPLEEEV. Acidic residues predominate over residues 429-447; sequence GVDEEEEEYEEEAPLEEEV.

Belongs to the tubulin family. As to quaternary structure, dimer of alpha and beta chains. A typical microtubule is a hollow water-filled tube with an outer diameter of 25 nm and an inner diameter of 15 nM. Alpha-beta heterodimers associate head-to-tail to form protofilaments running lengthwise along the microtubule wall with the beta-tubulin subunit facing the microtubule plus end conferring a structural polarity. Microtubules usually have 13 protofilaments but different protofilament numbers can be found in some organisms and specialized cells. It depends on Mg(2+) as a cofactor.

The protein localises to the cytoplasm. The protein resides in the cytoskeleton. In terms of biological role, tubulin is the major constituent of microtubules, a cylinder consisting of laterally associated linear protofilaments composed of alpha- and beta-tubulin heterodimers. Microtubules grow by the addition of GTP-tubulin dimers to the microtubule end, where a stabilizing cap forms. Below the cap, tubulin dimers are in GDP-bound state, owing to GTPase activity of alpha-tubulin. This chain is Tubulin beta-2 chain (TUB2), found in Colletotrichum gloeosporioides (Anthracnose fungus).